A 357-amino-acid chain; its full sequence is O-methyltransferase 1, chloroplastic (357 aa).

The N-terminal 53 residues, 1–53 (MPVLPWLAAAATTPVRRSPPLPATPRALLRLPASSFPPWSNCAKSGLPPRGPF), are a transit peptide targeting the chloroplast. The disordered stretch occupies residues 50–71 (RGPFATAADTPLGGSLPEPEEE).

It belongs to the methyltransferase superfamily. LCMT family. As to expression, expressed in roots, leaf sheaths, flag leaves and panicles.

The protein localises to the plastid. Its subcellular location is the chloroplast. It catalyses the reaction N-acetylserotonin + S-adenosyl-L-methionine = melatonin + S-adenosyl-L-homocysteine + H(+). It participates in aromatic compound metabolism; melatonin biosynthesis; melatonin from serotonin: step 1/2. Functionally, involved in melatonin biosynthesis. Can function as acetylserotonin O-methyltransferase. Catalyzes the transfer of a methyl group onto N-acetylserotonin, producing melatonin (N-acetyl-5-methoxytryptamine). Involved in the regulation of jasmonate- and brassinosteroid-mediated plant growth and defense responses. In Oryza sativa subsp. japonica (Rice), this protein is O-methyltransferase 1, chloroplastic.